The sequence spans 621 residues: 1-deoxy-D-xylulose-5-phosphate synthase (621 aa).

Thiamine diphosphate is bound by residues His80 and 121–123 (GHS). A Mg(2+)-binding site is contributed by Asp152. Thiamine diphosphate-binding positions include 153-154 (GA), Asn181, Tyr288, and Glu370. Asn181 serves as a coordination point for Mg(2+).

This sequence belongs to the transketolase family. DXPS subfamily. As to quaternary structure, homodimer. It depends on Mg(2+) as a cofactor. The cofactor is thiamine diphosphate.

It carries out the reaction D-glyceraldehyde 3-phosphate + pyruvate + H(+) = 1-deoxy-D-xylulose 5-phosphate + CO2. The protein operates within metabolic intermediate biosynthesis; 1-deoxy-D-xylulose 5-phosphate biosynthesis; 1-deoxy-D-xylulose 5-phosphate from D-glyceraldehyde 3-phosphate and pyruvate: step 1/1. Functionally, catalyzes the acyloin condensation reaction between C atoms 2 and 3 of pyruvate and glyceraldehyde 3-phosphate to yield 1-deoxy-D-xylulose-5-phosphate (DXP). The protein is 1-deoxy-D-xylulose-5-phosphate synthase of Aeromonas hydrophila subsp. hydrophila (strain ATCC 7966 / DSM 30187 / BCRC 13018 / CCUG 14551 / JCM 1027 / KCTC 2358 / NCIMB 9240 / NCTC 8049).